The following is a 272-amino-acid chain: Acidic leucine-rich nuclear phosphoprotein 32-related protein 2 (272 aa).

3 LRR repeats span residues 57-78 (SLEE…PRLP), 79-100 (ALRR…AAVA), and 106-127 (TLRH…APLA). Residues 139-184 (CPVTKAKGYRDKVFALIPSLKFLDGMDAEGNDCLDSDDEEDEEEDE) enclose the LRRCT domain. The segment at 163–272 (GMDAEGNDCL…DSEDDANGDN (110 aa)) is disordered. Over residues 164–241 (MDAEGNDCLD…DEAGADEEDE (78 aa)) the composition is skewed to acidic residues. Residues 248–257 (SKGSSGSAQP) are compositionally biased toward polar residues.

The protein belongs to the ANP32 family.

This Oryza sativa subsp. japonica (Rice) protein is Acidic leucine-rich nuclear phosphoprotein 32-related protein 2.